We begin with the raw amino-acid sequence, 840 residues long: V-type proton ATPase subunit a, vacuolar isoform (840 aa).

At alanine 2 the chain carries N-acetylalanine. The Cytoplasmic portion of the chain corresponds to 2 to 404 (AEKEEAIFRS…DCYGIAQYRE (403 aa)). Positions 117-145 (LEERLIQMEDATDQIEVQKNDLEQYRFIL) form a coiled coil. The helical transmembrane segment at 405–423 (INAGLPTIVTFPFMFAIMF) threads the bilayer. Over 424–425 (GD) the chain is Vacuolar. Residues 426–442 (MGHGFLMTLAALSLVLN) traverse the membrane as a helical segment. The Cytoplasmic segment spans residues 443–456 (EKKINKMKRGEIFD). A helical membrane pass occupies residues 457 to 486 (MAFTGRYIILLMGVFSMYTGFLYNDIFSKT). The Vacuolar portion of the chain corresponds to 487 to 534 (MTIFKSGWKWPDHWKKGESITATSVGTYPIGLDWAWHGTENALLFSNS). The chain crosses the membrane as a helical span at residues 535-554 (YKMKLSILMGFIHMTYSYFF). Topologically, residues 555-572 (SLANHLYFNSMIDIIGNF) are cytoplasmic. Residues 573-593 (IPGLLFMQGIFGYLSVCIVYK) traverse the membrane as a helical segment. The Vacuolar portion of the chain corresponds to 594 to 636 (WAVDWVKDGKPAPGLLNMLINMFLSPGTIDDELYPHQAKVQVF). A helical transmembrane segment spans residues 637-656 (LLLMALVCIPWLLLVKPLHF). The Cytoplasmic portion of the chain corresponds to 657–719 (KFTHKKKSHE…DIMIHQVIHT (63 aa)). The chain crosses the membrane as a helical span at residues 720–744 (IEFCLNCVSHTASYLRLWALSLAHA). Over 745 to 765 (QLSSVLWTMTIQIAFGFRGFV) the chain is Vacuolar. The helical transmembrane segment at 766 to 804 (GVFMTVALFAMWFALTCAVLVLMEGTSAMLHSLRLHWVE) threads the bilayer. The Cytoplasmic portion of the chain corresponds to 805–840 (SMSKFFVGEGLPYEPFAFEYKDMEVAVASASSSASS).

Belongs to the V-ATPase 116 kDa subunit family. As to quaternary structure, V-ATPase is a heteromultimeric enzyme composed of a peripheral catalytic V1 complex (components A to H) attached to an integral membrane V0 proton pore complex (components: a, c, c', c'', d, e, f and VOA1). Post-translationally, glycosylated.

The protein resides in the vacuole membrane. In terms of biological role, subunit of the V0 complex of vacuolar(H+)-ATPase (V-ATPase), a multisubunit enzyme composed of a peripheral complex (V1) that hydrolyzes ATP and a membrane integral complex (V0) that translocates protons. V-ATPase is responsible for acidifying and maintaining the pH of intracellular compartments. Is present only in vacuolar V-ATPase complexes; enzymes containing this subunit have a 4-fold higher ratio of proton transport to ATP hydrolysis than complexes containing the Golgi/endosomal isoform and undergo reversible dissociation of V1 and V0 in response to glucose depletion. The polypeptide is V-type proton ATPase subunit a, vacuolar isoform (Saccharomyces cerevisiae (strain ATCC 204508 / S288c) (Baker's yeast)).